Here is a 256-residue protein sequence, read N- to C-terminus: MVKSHIGSWILVLFVAMWSDVGLCKKRPKPGGGWNTGGSRYPGQGSPGGNRYPPQGGGGWGQPHGGGWGQPHGGGWGQPHGGGWGQPHGGGGWGQGGSHSQWNKPSKPKTNMKHVAGAAAAGAVVGGLGGYMLGSAMSRPLIHFGSDYEDRYYRENMYRYPNQVYYRPVDQYSNQNNFVHDCVNITVKQHTVTTTTKGENFTETDIKIMERVVEQMCITQYQRESQAYYQRGASVILFSSPPVILLISFLIFLIVG.

The N-terminal stretch at 1 to 24 is a signal peptide; the sequence is MVKSHIGSWILVLFVAMWSDVGLC. An interaction with GRB2, ERI3 and SYN1 region spans residues 25 to 233; the sequence is KKRPKPGGGW…ESQAYYQRGA (209 aa). The tract at residues 28-110 is disordered; the sequence is PKPGGGWNTG…QWNKPSKPKT (83 aa). A run of 5 repeats spans residues 54–62, 63–70, 71–78, 79–86, and 87–95. The tract at residues 54 to 95 is 5 X 8 AA tandem repeats of P-H-G-G-G-W-G-Q; that stretch reads PQGGGGWGQPHGGGWGQPHGGGWGQPHGGGWGQPHGGGGWGQ. Gly residues predominate over residues 55 to 97; sequence QGGGGWGQPHGGGWGQPHGGGWGQPHGGGWGQPHGGGGWGQGG. Residues histidine 64, glycine 65, glycine 66, histidine 72, glycine 73, glycine 74, histidine 80, glycine 81, glycine 82, histidine 88, glycine 90, and glycine 91 each coordinate Cu(2+). Cysteine 182 and cysteine 217 form a disulfide bridge. 2 N-linked (GlcNAc...) asparagine glycosylation sites follow: asparagine 184 and asparagine 200. A lipid anchor (GPI-anchor amidated alanine) is attached at alanine 233. Positions 234 to 256 are cleaved as a propeptide — removed in mature form; sequence SVILFSSPPVILLISFLIFLIVG.

This sequence belongs to the prion family. As to quaternary structure, monomer and homodimer. Has a tendency to aggregate into amyloid fibrils containing a cross-beta spine, formed by a steric zipper of superposed beta-strands. Soluble oligomers may represent an intermediate stage on the path to fibril formation. Copper binding may promote oligomerization. Interacts with GRB2, APP, ERI3/PRNPIP and SYN1. Mislocalized cytosolically exposed PrP interacts with MGRN1; this interaction alters MGRN1 subcellular location and causes lysosomal enlargement. Interacts with KIAA1191.

Its subcellular location is the cell membrane. The protein resides in the golgi apparatus. In terms of biological role, its primary physiological function is unclear. Has cytoprotective activity against internal or environmental stresses. May play a role in neuronal development and synaptic plasticity. May be required for neuronal myelin sheath maintenance. May play a role in iron uptake and iron homeostasis. Soluble oligomers are toxic to cultured neuroblastoma cells and induce apoptosis (in vitro). Association with GPC1 (via its heparan sulfate chains) targets PRNP to lipid rafts. Also provides Cu(2+) or Zn(2+) for the ascorbate-mediated GPC1 deaminase degradation of its heparan sulfate side chains. The sequence is that of Major prion protein (PRNP) from Budorcas taxicolor (Golden takin).